Here is a 276-residue protein sequence, read N- to C-terminus: Large ribosomal subunit protein uL2c (276 aa).

Disordered stretches follow at residues 1–51 and 224–276; these read MAIR…GIIT and VVMN…RRRK. Composition is skewed to polar residues over residues 7 to 18 and 27 to 37; these read RTYTPSTRNRPI and SNPQKKLTSGQ.

The protein belongs to the universal ribosomal protein uL2 family. As to quaternary structure, part of the 50S ribosomal subunit.

It localises to the plastid. Its subcellular location is the chloroplast. This is Large ribosomal subunit protein uL2c (rpl2) from Cycas taitungensis (Prince sago).